The primary structure comprises 377 residues: Lactosylceramide 1,3-N-acetyl-beta-D-glucosaminyltransferase (377 aa).

Residues 1 to 12 (MLISARRLRRCQ) are Cytoplasmic-facing. The chain crosses the membrane as a helical; Signal-anchor for type II membrane protein span at residues 13-30 (FFQLLTSCFVLSLMALLV). The Lumenal segment spans residues 31–377 (QEDNSLINHV…DTYPCSAAWS (347 aa)). N-linked (GlcNAc...) asparagine glycans are attached at residues Asn56, Asn167, and Asn275.

It belongs to the glycosyltransferase 31 family.

The protein resides in the golgi apparatus membrane. It carries out the reaction a beta-D-Gal-(1-&gt;4)-beta-D-Glc-(1&lt;-&gt;1)-Cer(d18:1(4E)) + UDP-N-acetyl-alpha-D-glucosamine = a beta-D-GlcNAc-(1-&gt;3)-beta-D-Gal-(1-&gt;4)-beta-D-Glc-(1&lt;-&gt;1)-Cer(d18:1(4E)) + UDP + H(+). It catalyses the reaction a neolactoside nLc4Cer(d18:1(4E)) + UDP-N-acetyl-alpha-D-glucosamine = a neolactoside IV(3)-beta-GlcNAc-nLc4Cer(d18:1(4E)) + UDP + H(+). It participates in protein modification; protein glycosylation. Beta-1,3-N-acetylglucosaminyltransferase that plays a key role in the synthesis of lacto- or neolacto-series carbohydrate chains on glycolipids. In Xenopus tropicalis (Western clawed frog), this protein is Lactosylceramide 1,3-N-acetyl-beta-D-glucosaminyltransferase (b3gnt5).